We begin with the raw amino-acid sequence, 305 residues long: Putative glutamine amidotransferase MTH_191 (305 aa).

The active site involves cysteine 2. In terms of domain architecture, Glutamine amidotransferase type-2 spans 2–305 (CGIAGVVYKD…SPGEVRVYEI (304 aa)).

In Methanothermobacter thermautotrophicus (strain ATCC 29096 / DSM 1053 / JCM 10044 / NBRC 100330 / Delta H) (Methanobacterium thermoautotrophicum), this protein is Putative glutamine amidotransferase MTH_191.